Consider the following 271-residue polypeptide: Pyrroline-5-carboxylate reductase (271 aa).

Belongs to the pyrroline-5-carboxylate reductase family.

The protein resides in the cytoplasm. The enzyme catalyses L-proline + NADP(+) = (S)-1-pyrroline-5-carboxylate + NADPH + 2 H(+). It catalyses the reaction L-proline + NAD(+) = (S)-1-pyrroline-5-carboxylate + NADH + 2 H(+). It functions in the pathway amino-acid biosynthesis; L-proline biosynthesis; L-proline from L-glutamate 5-semialdehyde: step 1/1. In terms of biological role, catalyzes the reduction of 1-pyrroline-5-carboxylate (PCA) to L-proline. In Staphylococcus saprophyticus subsp. saprophyticus (strain ATCC 15305 / DSM 20229 / NCIMB 8711 / NCTC 7292 / S-41), this protein is Pyrroline-5-carboxylate reductase.